We begin with the raw amino-acid sequence, 798 residues long: Cation channel sperm-associated auxiliary subunit delta (798 aa).

An N-terminal signal peptide occupies residues 1-20; the sequence is MLMLMLVAAVTMWLRPLVTA. At 21-723 the chain is on the extracellular side; sequence QLCRSRTVRT…AFPVQLVSAG (703 aa). Cystine bridges form between cysteine 23–cysteine 369, cysteine 59–cysteine 145, cysteine 144–cysteine 152, cysteine 387–cysteine 496, cysteine 510–cysteine 701, cysteine 525–cysteine 572, and cysteine 624–cysteine 652. Asparagine 123 carries an N-linked (GlcNAc...) asparagine glycan. Residues asparagine 230, asparagine 240, asparagine 472, asparagine 538, and asparagine 630 are each glycosylated (N-linked (GlcNAc...) asparagine). Residues 724 to 745 form a helical membrane-spanning segment; the sequence is VVILLIISSILGSVWLAYKTPK. Topologically, residues 746–798 are cytoplasmic; it reads LLRTARGRRIKKCATQLCRRCKTVCQFRASATARAGTEPPGRHRTPHGGRSDH.

This sequence belongs to the CATSPERD family. Component of the CatSper complex or CatSpermasome composed of the core pore-forming members CATSPER1, CATSPER2, CATSPER3 and CATSPER4 as well as auxiliary members CATSPERB, CATSPERG, CATSPERD, CATSPERE, CATSPERZ, C2CD6/CATSPERT, TMEM249, TMEM262 and EFCAB9. HSPA1 may be an additional auxiliary complex member. The core complex members CATSPER1, CATSPER2, CATSPER3 and CATSPER4 form a heterotetrameric channel. The auxiliary CATSPERB, CATSPERG, CATSPERD and CATSPERE subunits form a pavilion-like structure over the pore which stabilizes the complex through interactions with CATSPER4, CATSPER3, CATSPER1 and CATSPER2 respectively. TMEM262/CATSPERH interacts with CATSPERB, further stabilizing the complex. C2CD6/CATSPERT interacts at least with CATSPERD and is required for targeting the CatSper complex in the flagellar membrane.

It localises to the cell projection. Its subcellular location is the cilium. The protein localises to the flagellum membrane. In terms of biological role, auxiliary component of the CatSper complex, a complex involved in sperm cell hyperactivation. Sperm cell hyperactivation is needed for sperm motility which is essential late in the preparation of sperm for fertilization. Required for CATSPER1 stability before intraflagellar transport and/or incorporation of the CatSper complex channel into the flagellar membrane. The sequence is that of Cation channel sperm-associated auxiliary subunit delta from Homo sapiens (Human).